The primary structure comprises 267 residues: Methylglyoxal reductase DkgB (267 aa).

Tyrosine 39 functions as the Proton donor in the catalytic mechanism. Histidine 97 serves as a coordination point for substrate. 179–231 (MTLAYGKALKDEVIARIAAKHNATPAQVILAWAMGEGYSVIPSSTRRENLASS) contacts NADP(+).

Belongs to the aldo/keto reductase family. Monomer.

Its subcellular location is the cytoplasm. It carries out the reaction hydroxyacetone + NADP(+) = methylglyoxal + NADPH + H(+). Functionally, aldo-keto reductase that significantly contributes to cellular methylglyoxal detoxification by catalyzing the NADPH-dependent conversion of methylglyoxal to acetol. The polypeptide is Methylglyoxal reductase DkgB (Salmonella typhimurium (strain LT2 / SGSC1412 / ATCC 700720)).